The primary structure comprises 367 residues: Probable butyrate kinase (367 aa).

Belongs to the acetokinase family.

It localises to the cytoplasm. It carries out the reaction butanoate + ATP = butanoyl phosphate + ADP. The protein is Probable butyrate kinase of Bacillus cereus (strain ATCC 14579 / DSM 31 / CCUG 7414 / JCM 2152 / NBRC 15305 / NCIMB 9373 / NCTC 2599 / NRRL B-3711).